The primary structure comprises 177 residues: Protein C (177 aa).

Residues 1 to 10 (MSTKAWNASR) show a composition bias toward polar residues. Positions 1 to 37 (MSTKAWNASRLSGPDPSTPWSLKKPLQHGSRPPKGKR) are disordered.

It belongs to the morbillivirus protein C family.

The polypeptide is Protein C (P/V/C) (Bos indicus (Zebu)).